The sequence spans 446 residues: Thymidine phosphorylase (446 aa).

This sequence belongs to the thymidine/pyrimidine-nucleoside phosphorylase family. As to quaternary structure, homodimer.

The catalysed reaction is thymidine + phosphate = 2-deoxy-alpha-D-ribose 1-phosphate + thymine. It participates in pyrimidine metabolism; dTMP biosynthesis via salvage pathway; dTMP from thymine: step 1/2. Functionally, the enzymes which catalyze the reversible phosphorolysis of pyrimidine nucleosides are involved in the degradation of these compounds and in their utilization as carbon and energy sources, or in the rescue of pyrimidine bases for nucleotide synthesis. The chain is Thymidine phosphorylase from Idiomarina loihiensis (strain ATCC BAA-735 / DSM 15497 / L2-TR).